A 357-amino-acid polypeptide reads, in one-letter code: Spermatogenesis- and oogenesis-specific basic helix-loop-helix-containing protein 1 (357 aa).

Residues Met-1–Arg-14 show a composition bias toward basic and acidic residues. The disordered stretch occupies residues Met-1–Ser-40. Residues Thr-19–Asp-31 show a composition bias toward polar residues. Residues Pro-54 to Ala-105 form the bHLH domain. The interval Lys-145–Gly-210 is disordered. A compositionally biased stretch (low complexity) spans Ser-200 to Pro-209.

In terms of assembly, forms both hetero- and homodimers with SOHLH2. In terms of tissue distribution, in males, it is mainly expressed in testis, while in females it is mainly expressed in ovary. In testis, it is exclusively expressed in spermatogonia, with a preference for prespermatogonia and type A spermatogonia. In ovary, it is detected in germ cell cysts, primordial follicles, and primary follicles but is undetectable by the secondary follicle stage (at protein level). Expressed in the majority of spermatogonia in adult animals, but not in the most undifferentiated spermatogonial population.

The protein resides in the cytoplasm. Its subcellular location is the nucleus. Its function is as follows. Transcription regulator of both male and female germline differentiation. Suppresses genes involved in spermatogonial stem cells maintenance, and induces genes important for spermatogonial differentiation. Coordinates oocyte differentiation without affecting meiosis I. This Mus musculus (Mouse) protein is Spermatogenesis- and oogenesis-specific basic helix-loop-helix-containing protein 1 (Sohlh1).